The sequence spans 702 residues: Lipase maturation factor 2 (702 aa).

The next 8 helical transmembrane spans lie at Leu10–Ile30, Ala75–Leu95, Asp164–Val184, Leu226–Ile246, Leu259–Val279, Leu316–Leu336, Val363–Leu383, and Ala398–Val418. A glycan (N-linked (GlcNAc...) asparagine) is linked at Asn488. The helical transmembrane segment at Ile636–Ala656 threads the bilayer. Residues Leu660–Lys702 form a disordered region. Residues Gln665–Ala681 are compositionally biased toward basic and acidic residues. Residues Ala682–Arg693 are compositionally biased toward low complexity.

This sequence belongs to the lipase maturation factor family.

The protein resides in the endoplasmic reticulum membrane. Its function is as follows. Involved in the maturation of specific proteins in the endoplasmic reticulum. May be required for maturation and transport of active lipoprotein lipase (LPL) through the secretory pathway. This Mus musculus (Mouse) protein is Lipase maturation factor 2 (Lmf2).